We begin with the raw amino-acid sequence, 460 residues long: Light-independent protochlorophyllide reductase subunit N (460 aa).

C22, C47, and C107 together coordinate [4Fe-4S] cluster.

Belongs to the BchN/ChlN family. As to quaternary structure, protochlorophyllide reductase is composed of three subunits; ChlL, ChlN and ChlB. Forms a heterotetramer of two ChlB and two ChlN subunits. [4Fe-4S] cluster is required as a cofactor.

The catalysed reaction is chlorophyllide a + oxidized 2[4Fe-4S]-[ferredoxin] + 2 ADP + 2 phosphate = protochlorophyllide a + reduced 2[4Fe-4S]-[ferredoxin] + 2 ATP + 2 H2O. Its pathway is porphyrin-containing compound metabolism; chlorophyll biosynthesis (light-independent). In terms of biological role, component of the dark-operative protochlorophyllide reductase (DPOR) that uses Mg-ATP and reduced ferredoxin to reduce ring D of protochlorophyllide (Pchlide) to form chlorophyllide a (Chlide). This reaction is light-independent. The NB-protein (ChlN-ChlB) is the catalytic component of the complex. In Thermosynechococcus vestitus (strain NIES-2133 / IAM M-273 / BP-1), this protein is Light-independent protochlorophyllide reductase subunit N.